A 298-amino-acid polypeptide reads, in one-letter code: GTPase Era (298 aa).

The Era-type G domain occupies 3–170 (KSGFVAILGR…VQLLKDNLEE (168 aa)). The segment at 11–18 (GRPNVGKS) is G1. Residue 11-18 (GRPNVGKS) participates in GTP binding. The tract at residues 37 to 41 (QSTRN) is G2. The segment at 58–61 (DTPG) is G3. GTP is bound by residues 58–62 (DTPGI) and 120–123 (NKID). Residues 120-123 (NKID) form a G4 region. The interval 149-151 (ISA) is G5. In terms of domain architecture, KH type-2 spans 201 to 279 (TQQEVPHSVA…YLETWVKVKK (79 aa)).

It belongs to the TRAFAC class TrmE-Era-EngA-EngB-Septin-like GTPase superfamily. Era GTPase family. Monomer.

The protein resides in the cytoplasm. Its subcellular location is the cell membrane. Functionally, an essential GTPase that binds both GDP and GTP, with rapid nucleotide exchange. Plays a role in 16S rRNA processing and 30S ribosomal subunit biogenesis and possibly also in cell cycle regulation and energy metabolism. The sequence is that of GTPase Era from Streptococcus equi subsp. zooepidemicus (strain H70).